Reading from the N-terminus, the 591-residue chain is V-type ATP synthase alpha chain (591 aa).

233-240 (GPFGAGKT) lines the ATP pocket.

Belongs to the ATPase alpha/beta chains family.

It carries out the reaction ATP + H2O + 4 H(+)(in) = ADP + phosphate + 5 H(+)(out). In terms of biological role, produces ATP from ADP in the presence of a proton gradient across the membrane. The V-type alpha chain is a catalytic subunit. The chain is V-type ATP synthase alpha chain from Streptococcus pyogenes serotype M12 (strain MGAS2096).